The sequence spans 700 residues: Putative cysteine-rich receptor-like protein kinase 30 (700 aa).

The N-terminal stretch at 1-24 (MRQNNLFSLIFWLVPVSLIIVVSA) is a signal peptide. Gnk2-homologous domains are found at residues 25–129 (QLCS…NQPS) and 135–250 (LESV…LYPF). At 25 to 285 (QLCSEKFGTF…KDEKTIHTGT (261 aa)) the chain is on the extracellular side. N-linked (GlcNAc...) asparagine glycosylation is found at N63, N105, N146, N150, and N191. The helical transmembrane segment at 286–306 (IIGIVIVVAMVIIMALLALGV) threads the bilayer. Topologically, residues 307 to 700 (SVCRSRKKYQ…SKSMYRNTED (394 aa)) are cytoplasmic. Residues 346–626 (FLASNKIGQG…IFQMLTNSSI (281 aa)) form the Protein kinase domain. Residues 352-360 (IGQGGFGEV) and K374 contribute to the ATP site. The Proton acceptor role is filled by D474. The residue at position 478 (S478) is a Phosphoserine. Residue T514 is modified to Phosphothreonine. Y522 carries the phosphotyrosine modification.

This sequence belongs to the protein kinase superfamily. Ser/Thr protein kinase family. CRK subfamily.

The protein localises to the membrane. The enzyme catalyses L-seryl-[protein] + ATP = O-phospho-L-seryl-[protein] + ADP + H(+). It carries out the reaction L-threonyl-[protein] + ATP = O-phospho-L-threonyl-[protein] + ADP + H(+). The polypeptide is Putative cysteine-rich receptor-like protein kinase 30 (CRK30) (Arabidopsis thaliana (Mouse-ear cress)).